The chain runs to 1799 residues: Putative neural-cadherin 2 (1799 aa).

N-linked (GlcNAc...) asparagine glycosylation is found at N13, N64, N86, N118, N195, N260, N264, N283, and N377. Cadherin domains are found at residues 37–136 (DRFL…PPVF), 137–252 (DRQT…APQF), 253–364 (PQGI…PPQF), 368–485 (EWVT…VPKF), 486–590 (DREH…APTF), 590–709 (FAQD…QPGS), and 708–812 (GSKS…AGSM). N601, N793, N910, N948, and N969 each carry an N-linked (GlcNAc...) asparagine glycan. One can recognise an EGF-like 1 domain in the interval 973-1010 (QDHNCRTHLCYNGGRCVETRNGPKCVACPVGYNGPRCQ). Intrachain disulfides connect C977-C988, C982-C997, C1000-C1009, C1191-C1217, C1224-C1239, C1233-C1248, and C1250-C1259. The Laminin G-like 1 domain maps to 1011–1217 (QSTRSFRGNG…ALARNSFPAC (207 aa)). Positions 1220–1260 (TDEVCLKTEHTARCWEHGNCVASLVQAKCHCQPGWMGPGCN) constitute an EGF-like 2 domain. The region spanning 1263–1454 (TIPTTFKAQS…TMARNLERNC (192 aa)) is the Laminin G-like 2 domain. Residues N1376 and N1437 are each glycosylated (N-linked (GlcNAc...) asparagine). 4 cysteine pairs are disulfide-bonded: C1419-C1454, C1501-C1512, C1506-C1523, and C1525-C1534. Positions 1497-1535 (DRNECLDLPCLNGATCINLEPRLRYRCICPEGYWGENCE) constitute an EGF-like 3; calcium-binding domain. The chain crosses the membrane as a helical span at residues 1549–1569 (ALGAIFVCLIIILILALIFVL). The interval 1726–1799 (ASSQLPSDGG…PLPEVDKVVL (74 aa)) is disordered. Composition is skewed to gly residues over residues 1733–1744 (DGGGGSGDGPGP), 1752–1763 (LGGGGTGGGSGI), and 1775–1786 (SGAGPGGGGGSS).

It is found in the cell membrane. Functionally, cadherins are calcium-dependent cell adhesion proteins. They preferentially interact with themselves in a homophilic manner in connecting cells. This is Putative neural-cadherin 2 (CadN2) from Drosophila melanogaster (Fruit fly).